The chain runs to 426 residues: Serine--tRNA ligase (426 aa).

A disordered region spans residues 37–63; sequence RKSVQTRTEQLQAERNARSKSIGQAKA. 233–235 contacts L-serine; that stretch reads TAE. 264-266 is a binding site for ATP; the sequence is RSE. L-serine is bound at residue Glu287. Residue 351 to 354 participates in ATP binding; the sequence is EISS. Ser387 contacts L-serine.

Belongs to the class-II aminoacyl-tRNA synthetase family. Type-1 seryl-tRNA synthetase subfamily. In terms of assembly, homodimer. The tRNA molecule binds across the dimer.

It is found in the cytoplasm. It catalyses the reaction tRNA(Ser) + L-serine + ATP = L-seryl-tRNA(Ser) + AMP + diphosphate + H(+). The catalysed reaction is tRNA(Sec) + L-serine + ATP = L-seryl-tRNA(Sec) + AMP + diphosphate + H(+). It functions in the pathway aminoacyl-tRNA biosynthesis; selenocysteinyl-tRNA(Sec) biosynthesis; L-seryl-tRNA(Sec) from L-serine and tRNA(Sec): step 1/1. Functionally, catalyzes the attachment of serine to tRNA(Ser). Is also able to aminoacylate tRNA(Sec) with serine, to form the misacylated tRNA L-seryl-tRNA(Sec), which will be further converted into selenocysteinyl-tRNA(Sec). This is Serine--tRNA ligase from Pseudomonas entomophila (strain L48).